The following is a 91-amino-acid chain: DNA-directed RNA polymerase subunit omega (91 aa).

This sequence belongs to the RNA polymerase subunit omega family. As to quaternary structure, the RNAP catalytic core consists of 2 alpha, 1 beta, 1 beta' and 1 omega subunit. When a sigma factor is associated with the core the holoenzyme is formed, which can initiate transcription.

It carries out the reaction RNA(n) + a ribonucleoside 5'-triphosphate = RNA(n+1) + diphosphate. Promotes RNA polymerase assembly. Latches the N- and C-terminal regions of the beta' subunit thereby facilitating its interaction with the beta and alpha subunits. In Aeromonas hydrophila subsp. hydrophila (strain ATCC 7966 / DSM 30187 / BCRC 13018 / CCUG 14551 / JCM 1027 / KCTC 2358 / NCIMB 9240 / NCTC 8049), this protein is DNA-directed RNA polymerase subunit omega.